The following is a 141-amino-acid chain: Putative 8-oxo-dGTP diphosphatase 2 (141 aa).

The Nudix hydrolase domain occupies 2–131; the sequence is LNQIVVAGAI…WIADLARTLN (130 aa). Gly-37, Glu-52, Glu-55, and Glu-56 together coordinate Mg(2+). The short motif at 37–58 is the Nudix box element; that stretch reads GKVAAGETERAALARELAEELG.

This sequence belongs to the Nudix hydrolase family. Requires Mg(2+) as cofactor. Mn(2+) is required as a cofactor.

The enzyme catalyses 8-oxo-dGTP + H2O = 8-oxo-dGMP + diphosphate + H(+). May be involved in the GO system responsible for removing an oxidatively damaged form of guanine (7,8-dihydro-8-oxoguanine, 8-oxo-dGTP) from DNA and the nucleotide pool. 8-oxo-dGTP is inserted opposite dA and dC residues of template DNA with almost equal efficiency thus leading to A.T to G.C transversions. MutT specifically degrades 8-oxo-dGTP to the monophosphate. In Mycobacterium tuberculosis (strain CDC 1551 / Oshkosh), this protein is Putative 8-oxo-dGTP diphosphatase 2 (mutT2).